We begin with the raw amino-acid sequence, 308 residues long: Protein translocase subunit SecF (308 aa).

A run of 6 helical transmembrane segments spans residues 28–48, 140–160, 164–184, 194–214, 246–266, and 272–292; these read SIIL…NFGI, IEAG…YIWV, WYFG…ALGF, LSTI…SVVI, ILTV…GGEA, and VLVF…SAPI.

The protein belongs to the SecD/SecF family. SecF subfamily. As to quaternary structure, forms a complex with SecD. Part of the essential Sec protein translocation apparatus which comprises SecA, SecYEG and auxiliary proteins SecDF-YajC and YidC.

The protein resides in the cell inner membrane. Functionally, part of the Sec protein translocase complex. Interacts with the SecYEG preprotein conducting channel. SecDF uses the proton motive force (PMF) to complete protein translocation after the ATP-dependent function of SecA. The chain is Protein translocase subunit SecF from Rickettsia felis (strain ATCC VR-1525 / URRWXCal2) (Rickettsia azadi).